The sequence spans 345 residues: uncharacterized protein (345 aa).

8 helical membrane passes run 9–31, 84–103, 116–138, 148–170, 182–204, 269–286, 291–308, and 313–335; these read VVAFSIVLSALLCSISLLQAAFV, TLVAILGTGLSAPLLLTYLL, YFSLFLCALNFEGVRLFLPILYT, VPMQIVMFFRSLALLALFASGIF, VVFVLCTVAFLISRYTTIHTIHA, WFFWTTAVLSALSYGVLG, ISHYYIAAAALPFVIAGY, and HGLTWSACIVGLFLLNTASVFFI.

The protein resides in the cell membrane. This is an uncharacterized protein from Treponema pallidum (strain Nichols).